Reading from the N-terminus, the 82-residue chain is ATP synthase subunit c, chloroplastic (82 aa).

2 helical membrane passes run I4–P24 and L57–A77.

Belongs to the ATPase C chain family. In terms of assembly, F-type ATPases have 2 components, F(1) - the catalytic core - and F(0) - the membrane proton channel. F(1) has five subunits: alpha(3), beta(3), gamma(1), delta(1), epsilon(1). F(0) has four main subunits: a(1), b(1), b'(1) and c(10-14). The alpha and beta chains form an alternating ring which encloses part of the gamma chain. F(1) is attached to F(0) by a central stalk formed by the gamma and epsilon chains, while a peripheral stalk is formed by the delta, b and b' chains.

It is found in the plastid. The protein resides in the chloroplast thylakoid membrane. Its function is as follows. F(1)F(0) ATP synthase produces ATP from ADP in the presence of a proton or sodium gradient. F-type ATPases consist of two structural domains, F(1) containing the extramembraneous catalytic core and F(0) containing the membrane proton channel, linked together by a central stalk and a peripheral stalk. During catalysis, ATP synthesis in the catalytic domain of F(1) is coupled via a rotary mechanism of the central stalk subunits to proton translocation. Functionally, key component of the F(0) channel; it plays a direct role in translocation across the membrane. A homomeric c-ring of between 10-14 subunits forms the central stalk rotor element with the F(1) delta and epsilon subunits. The polypeptide is ATP synthase subunit c, chloroplastic (Thalassiosira pseudonana (Marine diatom)).